A 521-amino-acid chain; its full sequence is Bifunctional dihydrofolate reductase-thymidylate synthase (521 aa).

The DHFR domain maps to 17–194 (NYQVVVAGTR…IRHSFVSFVR (178 aa)). V21 serves as a coordination point for substrate. Residues A23 and 29–35 (GIGKDGV) contribute to the NADP(+) site. D43 serves as a coordination point for substrate. NADP(+)-binding positions include 67–69 (RKT) and 88–91 (LTRS). Residue I130 coordinates substrate. 131–138 (GGGQVLRE) is a binding site for NADP(+). T151 contacts substrate. Residues 197–521 (KSVAETHESN…HQKIEMKMAV (325 aa)) form a thymidylate synthase region. R258 contacts dUMP. The active site involves C403. DUMP contacts are provided by residues H404, 422-426 (QRSAD), N434, and 464-466 (HVY).

The protein in the N-terminal section; belongs to the dihydrofolate reductase family. It in the C-terminal section; belongs to the thymidylate synthase family.

It catalyses the reaction (6S)-5,6,7,8-tetrahydrofolate + NADP(+) = 7,8-dihydrofolate + NADPH + H(+). It carries out the reaction dUMP + (6R)-5,10-methylene-5,6,7,8-tetrahydrofolate = 7,8-dihydrofolate + dTMP. It participates in cofactor biosynthesis; tetrahydrofolate biosynthesis; 5,6,7,8-tetrahydrofolate from 7,8-dihydrofolate: step 1/1. Its function is as follows. Bifunctional enzyme. Involved in de novo dTMP biosynthesis. Key enzyme in folate metabolism. Can play two different roles depending on the source of dihydrofolate: de novo synthesis of tetrahydrofolate or recycling of the dihydrofolate released as one of the end products of the TS catalyzed reaction. Catalyzes an essential reaction for de novo glycine and purine synthesis, DNA precursor synthesis, and for the conversion of dUMP to dTMP. The chain is Bifunctional dihydrofolate reductase-thymidylate synthase (DRTS) from Zea mays (Maize).